The following is a 145-amino-acid chain: Peptide methionine sulfoxide reductase MsrB (145 aa).

The MsrB domain occupies 4–127 (SDELKQRIGD…NSAALKFIPY (124 aa)). Cys-116 functions as the Nucleophile in the catalytic mechanism.

The protein belongs to the MsrB Met sulfoxide reductase family.

It carries out the reaction L-methionyl-[protein] + [thioredoxin]-disulfide + H2O = L-methionyl-(R)-S-oxide-[protein] + [thioredoxin]-dithiol. The protein is Peptide methionine sulfoxide reductase MsrB of Streptococcus pyogenes serotype M1.